A 371-amino-acid chain; its full sequence is tRNA 2-selenouridine synthase (371 aa).

Residues 12–135 (FLDDVPMMDM…MRTFLLDTTQ (124 aa)) enclose the Rhodanese domain. The active-site S-selanylcysteine intermediate is cysteine 95.

This sequence belongs to the SelU family. Monomer.

The catalysed reaction is 5-methylaminomethyl-2-thiouridine(34) in tRNA + selenophosphate + (2E)-geranyl diphosphate + H2O + H(+) = 5-methylaminomethyl-2-selenouridine(34) in tRNA + (2E)-thiogeraniol + phosphate + diphosphate. It catalyses the reaction 5-methylaminomethyl-2-thiouridine(34) in tRNA + (2E)-geranyl diphosphate = 5-methylaminomethyl-S-(2E)-geranyl-thiouridine(34) in tRNA + diphosphate. The enzyme catalyses 5-methylaminomethyl-S-(2E)-geranyl-thiouridine(34) in tRNA + selenophosphate + H(+) = 5-methylaminomethyl-2-(Se-phospho)selenouridine(34) in tRNA + (2E)-thiogeraniol. It carries out the reaction 5-methylaminomethyl-2-(Se-phospho)selenouridine(34) in tRNA + H2O = 5-methylaminomethyl-2-selenouridine(34) in tRNA + phosphate. Functionally, involved in the post-transcriptional modification of the uridine at the wobble position (U34) of tRNA(Lys), tRNA(Glu) and tRNA(Gln). Catalyzes the conversion of 2-thiouridine (S2U-RNA) to 2-selenouridine (Se2U-RNA). Acts in a two-step process involving geranylation of 2-thiouridine (S2U) to S-geranyl-2-thiouridine (geS2U) and subsequent selenation of the latter derivative to 2-selenouridine (Se2U) in the tRNA chain. In Pseudomonas entomophila (strain L48), this protein is tRNA 2-selenouridine synthase.